The primary structure comprises 305 residues: Endonuclease III-like protein 1 (305 aa).

A mitochondrion-targeting transit peptide spans 1–28; the sequence is MNAAGVRMVVTRARSRGTGASLRRRGEK. The disordered stretch occupies residues 1-83; it reads MNAAGVRMVV…HLQAPSWQPQ (83 aa). The residue at position 64 (S64) is a Phosphoserine. The 25-residue stretch at 192-216 folds into the HhH domain; that stretch reads RYDGDIPASVAELVALPGVGPKMAH. K213 acts as the Nucleophile; for N-glycosylase activity in catalysis. The [4Fe-4S] cluster site is built by C283, C290, C293, and C299.

The protein belongs to the Nth/MutY family. As to quaternary structure, interacts with YBX1. Interacts with ERCC5/XPG; the interaction stimulates NTHL1 activity and NTHL1 binding to its DNA substrate. Requires [4Fe-4S] cluster as cofactor.

The protein localises to the nucleus. Its subcellular location is the mitochondrion. The enzyme catalyses 2'-deoxyribonucleotide-(2'-deoxyribose 5'-phosphate)-2'-deoxyribonucleotide-DNA = a 3'-end 2'-deoxyribonucleotide-(2,3-dehydro-2,3-deoxyribose 5'-phosphate)-DNA + a 5'-end 5'-phospho-2'-deoxyribonucleoside-DNA + H(+). In terms of biological role, bifunctional DNA N-glycosylase with associated apurinic/apyrimidinic (AP) lyase function that catalyzes the first step in base excision repair (BER), the primary repair pathway for the repair of oxidative DNA damage. The DNA N-glycosylase activity releases the damaged DNA base from DNA by cleaving the N-glycosidic bond, leaving an AP site. The AP lyase activity cleaves the phosphodiester bond 3' to the AP site by a beta-elimination. Primarily recognizes and repairs oxidative base damage of pyrimidines. This is Endonuclease III-like protein 1 from Bos taurus (Bovine).